Consider the following 91-residue polypeptide: Cytochrome b-c1 complex subunit 10, mitochondrial (91 aa).

The Mitochondrial matrix portion of the chain corresponds to 1 to 34 (MFATSILRSAYPAYKSPYGPKYQYQPHIDGITPK). The chain crosses the membrane as a helical span at residues 35–58 (QLVRILPTAAAWTGVALFAVVYYA). Residues 59–91 (SGIPRLRRDVLQRIPYLGERYFVNEIPASDNPF) are Mitochondrial intermembrane-facing.

This sequence belongs to the UQCR11/QCR10 family. In terms of assembly, component of the ubiquinol-cytochrome c oxidoreductase (cytochrome b-c1 complex, complex III, CIII), a multisubunit enzyme composed of 10 subunits. The complex is composed of 3 respiratory subunits cytochrome b (cob), cytochrome c1 (cyt-1) and Rieske protein (fes-1), 2 core protein subunits pep and ucr-1, and 5 low-molecular weight protein subunits qcr6, qcr7, qcr8, qcr9 and probably NCU16844/qcr10. The complex exists as an obligatory dimer and forms supercomplexes (SCs) in the inner mitochondrial membrane with NADH-ubiquinone oxidoreductase (complex I, CI) and cytochrome c oxidase (complex IV, CIV), resulting in different assemblies (supercomplexes SCI(1)III(2), SCIII(2)IV(1) and SCIII(2)IV(2) as well as higher order I(x)III(y)IV(z) megacomplexes).

The protein localises to the mitochondrion inner membrane. In terms of biological role, component of the ubiquinol-cytochrome c oxidoreductase, a multisubunit transmembrane complex that is part of the mitochondrial electron transport chain which drives oxidative phosphorylation. The respiratory chain contains 3 multisubunit complexes succinate dehydrogenase (complex II, CII), ubiquinol-cytochrome c oxidoreductase (cytochrome b-c1 complex, complex III, CIII) and cytochrome c oxidase (complex IV, CIV), that cooperate to transfer electrons derived from NADH and succinate to molecular oxygen, creating an electrochemical gradient over the inner membrane that drives transmembrane transport and the ATP synthase. The cytochrome b-c1 complex catalyzes electron transfer from ubiquinol to cytochrome c, linking this redox reaction to translocation of protons across the mitochondrial inner membrane, with protons being carried across the membrane as hydrogens on the quinol. In the process called Q cycle, 2 protons are consumed from the matrix, 4 protons are released into the intermembrane space and 2 electrons are passed to cytochrome c. The polypeptide is Cytochrome b-c1 complex subunit 10, mitochondrial (Neurospora crassa (strain ATCC 24698 / 74-OR23-1A / CBS 708.71 / DSM 1257 / FGSC 987)).